Here is a 97-residue protein sequence, read N- to C-terminus: Large ribosomal subunit protein bL27 (97 aa).

Residues methionine 1–phenylalanine 12 constitute a propeptide that is removed on maturation. The segment at alanine 13–aspartate 38 is disordered.

This sequence belongs to the bacterial ribosomal protein bL27 family. In terms of processing, the N-terminus is cleaved by ribosomal processing cysteine protease Prp.

The sequence is that of Large ribosomal subunit protein bL27 from Streptococcus equi subsp. equi (strain 4047).